A 349-amino-acid polypeptide reads, in one-letter code: Ribosomal RNA small subunit methyltransferase H 1 (349 aa).

S-adenosyl-L-methionine contacts are provided by residues Gly79 to His81, Asp99, Phe129, Asp148, and Gln155.

Belongs to the methyltransferase superfamily. RsmH family.

The protein localises to the cytoplasm. It catalyses the reaction cytidine(1402) in 16S rRNA + S-adenosyl-L-methionine = N(4)-methylcytidine(1402) in 16S rRNA + S-adenosyl-L-homocysteine + H(+). Functionally, specifically methylates the N4 position of cytidine in position 1402 (C1402) of 16S rRNA. In Agathobacter rectalis (strain ATCC 33656 / DSM 3377 / JCM 17463 / KCTC 5835 / VPI 0990) (Eubacterium rectale), this protein is Ribosomal RNA small subunit methyltransferase H 1.